A 348-amino-acid polypeptide reads, in one-letter code: Neutral peroxidase (348 aa).

Residues 1–20 (MASFVARLTLALSFIALALA) form the signal peptide. Positions 21 to 67 (GYSLVQNTLSSPTHTRLNLIPTWLDSTFDSADVLSYLGFGKSSGRLS) are excised as a propeptide. Intrachain disulfides connect Cys71–Cys149, Cys102–Cys107, Cys156–Cys344, and Cys235–Cys256. His100 acts as the Proton acceptor in catalysis. Ca(2+) contacts are provided by Asp101, Val104, Gly106, and Asp108. 5 N-linked (GlcNAc...) asparagine glycosylation sites follow: Asn114, Asn118, Asn173, Asn177, and Asn189. Pro198 is a binding site for substrate. N-linked (GlcNAc...) asparagine glycosylation is present at Asn203. Heme b is bound at residue His228. Residue Thr229 coordinates Ca(2+). Residues Asn247 and Asn261 are each glycosylated (N-linked (GlcNAc...) asparagine). Ca(2+) contacts are provided by Asp269, Ser271, and Asp276. Asn300 is a glycosylation site (N-linked (GlcNAc...) asparagine).

The protein belongs to the peroxidase family. Classical plant (class III) peroxidase subfamily. Requires Ca(2+) as cofactor. Heme b is required as a cofactor. As to expression, highly expressed in suspension cultured cells. Weak expression also found in the stems of intact plants. No expression in leaf, tuberous root and non-tuberous root.

It localises to the secreted. The catalysed reaction is 2 a phenolic donor + H2O2 = 2 a phenolic radical donor + 2 H2O. Functionally, removal of H(2)O(2), oxidation of toxic reductants, biosynthesis and degradation of lignin, suberization, auxin catabolism, response to environmental stresses such as wounding, pathogen attack and oxidative stress. These functions might be dependent on each isozyme/isoform in each plant tissue. Its function is as follows. May contribute to protection against cold-induced oxidative stress. The chain is Neutral peroxidase from Ipomoea batatas (Sweet potato).